Reading from the N-terminus, the 1260-residue chain is Agglutinin-like protein 1 (1260 aa).

A signal peptide spans 1 to 17; sequence MLQQFTLLFLYLSIASA. Cystine bridges form between cysteine 73–cysteine 150, cysteine 96–cysteine 112, cysteine 205–cysteine 298, and cysteine 227–cysteine 256. A run of 10 repeats spans residues 433 to 468, 469 to 504, 505 to 540, 541 to 576, 577 to 612, 613 to 648, 649 to 684, 685 to 720, 721 to 756, and 757 to 792. The 10 X 36 AA tandem repeats stretch occupies residues 433 to 792; sequence SPNPTVSTTE…GGTDTVIIYE (360 aa). The N-linked (GlcNAc...) asparagine glycan is linked to asparagine 471. N-linked (GlcNAc...) asparagine glycans are attached at residues asparagine 579 and asparagine 615. N-linked (GlcNAc...) asparagine glycosylation is found at asparagine 687 and asparagine 723. Residues asparagine 820, asparagine 886, asparagine 918, and asparagine 973 are each glycosylated (N-linked (GlcNAc...) asparagine). 2 stretches are compositionally biased toward polar residues: residues 896-918 and 964-979; these read PTAS…SSDN and KVTF…GTHD. 2 disordered regions span residues 896 to 924 and 954 to 1226; these read PTAS…KSGV and SIPS…SSSP. The segment covering 980–995 has biased composition (low complexity); sequence SQSTSTEIEIVTTSST. The stretch at 983 to 1043 is one 2-1 repeat; that stretch reads TSTEIEIVTT…TTSQPTGDNG (61 aa). The 2 X 26 AA approximate repeats stretch occupies residues 983–1152; it reads TSTEIEIVTT…ATTQATNENG (170 aa). Residues 1002–1062 show a composition bias toward polar residues; sequence VSSNTDLTSE…PTVATSTLAS (61 aa). Asparagine 1045 and asparagine 1068 each carry an N-linked (GlcNAc...) asparagine glycan. Positions 1073–1090 are enriched in polar residues; sequence HESASTSLKPSMGENSGL. A compositionally biased stretch (low complexity) spans 1091–1110; the sequence is TTSTEIEATTTSPTEAPSPA. The stretch at 1092–1152 is one 2-2 repeat; it reads TSTEIEATTT…ATTQATNENG (61 aa). Residues 1111-1154 are compositionally biased toward polar residues; the sequence is VSSGTDVTTEPTDTREQPTTLSTTSKTNSESVATTQATNENGGK. Composition is skewed to low complexity over residues 1155 to 1176 and 1197 to 1226; these read SPST…SANS and SHST…SSSP.

This sequence belongs to the ALS family. In terms of processing, N-glycosylated and O-glycosylated. The GPI-anchor is attached to the protein in the endoplasmic reticulum and serves to target the protein to the cell surface. There, the glucosamine-inositol phospholipid moiety is cleaved off and the GPI-modified mannoprotein is covalently attached via its lipidless GPI glycan remnant to the 1,6-beta-glucan of the outer cell wall layer.

It localises to the cell membrane. It is found in the secreted. The protein resides in the cell wall. Functionally, major cell surface adhesion protein which mediates both yeast-to-host tissue adherence and yeast aggregation. Acts as a downstream effector of the EFG1 regulatory pathway. Required for rapamycin-induced aggregation of C.albicans. Binds glycans and mediates adherence to endothelial and epithelial cells, thereby playing an important role in the pathogenesis of C.albicans infections. This Candida albicans (Yeast) protein is Agglutinin-like protein 1 (ALS1).